We begin with the raw amino-acid sequence, 254 residues long: MQEYFAKRIIPCLDVDKGRVVKGVNFVGLKDAGDPVEVAKRYNEEGADEITFLDITATYEERDTIVHIVEEVAKEVFIPLTVGGGIRELDDIYKLLAVGCDKVSINSAAVKKPEFVDEAAKRFGSQCIVVAIDAKRVGDGWHVFTAGGRHDSGKDAIEWAKEVYDRGAGEILLTSMDADGTKAGYDLELTRAISDAVDIPVIASGGAGTMEHIKDAFTKGHADAALAASIFHFKEIDIMELKHYLHNEGIPVRL.

Catalysis depends on residues aspartate 14 and aspartate 133.

The protein belongs to the HisA/HisF family. As to quaternary structure, heterodimer of HisH and HisF.

The protein resides in the cytoplasm. The enzyme catalyses 5-[(5-phospho-1-deoxy-D-ribulos-1-ylimino)methylamino]-1-(5-phospho-beta-D-ribosyl)imidazole-4-carboxamide + L-glutamine = D-erythro-1-(imidazol-4-yl)glycerol 3-phosphate + 5-amino-1-(5-phospho-beta-D-ribosyl)imidazole-4-carboxamide + L-glutamate + H(+). It functions in the pathway amino-acid biosynthesis; L-histidine biosynthesis; L-histidine from 5-phospho-alpha-D-ribose 1-diphosphate: step 5/9. Its function is as follows. IGPS catalyzes the conversion of PRFAR and glutamine to IGP, AICAR and glutamate. The HisF subunit catalyzes the cyclization activity that produces IGP and AICAR from PRFAR using the ammonia provided by the HisH subunit. In Nitratiruptor sp. (strain SB155-2), this protein is Imidazole glycerol phosphate synthase subunit HisF.